The sequence spans 210 residues: 7-carboxy-7-deazaguanine synthase (210 aa).

Substrate is bound by residues 12–14 and arginine 27; that span reads LQG. One can recognise a Radical SAM core domain in the interval 18–210; the sequence is QAGKAAVFCR…VQTHKYLGLP (193 aa). [4Fe-4S] cluster-binding residues include cysteine 31, cysteine 46, and cysteine 49. Residue threonine 51 coordinates Mg(2+). Threonine 90 provides a ligand contact to substrate. Residues glycine 92, 133–135, and 173–176 each bind S-adenosyl-L-methionine; these read SPK and QPMD. Residue proline 210 coordinates substrate.

It belongs to the radical SAM superfamily. 7-carboxy-7-deazaguanine synthase family. Homodimer. It depends on [4Fe-4S] cluster as a cofactor. The cofactor is S-adenosyl-L-methionine. Mg(2+) serves as cofactor.

The enzyme catalyses 6-carboxy-5,6,7,8-tetrahydropterin + H(+) = 7-carboxy-7-deazaguanine + NH4(+). The protein operates within purine metabolism; 7-cyano-7-deazaguanine biosynthesis. Catalyzes the complex heterocyclic radical-mediated conversion of 6-carboxy-5,6,7,8-tetrahydropterin (CPH4) to 7-carboxy-7-deazaguanine (CDG), a step common to the biosynthetic pathways of all 7-deazapurine-containing compounds. In Caulobacter vibrioides (strain ATCC 19089 / CIP 103742 / CB 15) (Caulobacter crescentus), this protein is 7-carboxy-7-deazaguanine synthase.